The chain runs to 171 residues: Putative phosphoesterase BH1439 (171 aa).

Residue His-34 is the Proton donor of the active site. 2 short sequence motifs (HXTX) span residues 34 to 37 and 115 to 118; these read HVTL and HLTI. The active-site Proton acceptor is the His-115.

It belongs to the 2H phosphoesterase superfamily. YjcG family.

This is Putative phosphoesterase BH1439 from Halalkalibacterium halodurans (strain ATCC BAA-125 / DSM 18197 / FERM 7344 / JCM 9153 / C-125) (Bacillus halodurans).